The sequence spans 90 residues: MYSLELSLRYSPFPIAIQKKEFEDVKRIYEEIKNSMNEPLETSNLVELRCDKVQDKLIAVRAQEIISVQIYEKSSVAGGAKRPGFSLDID.

It belongs to the UPF0367 family.

This chain is UPF0367 protein PMT9312_0127, found in Prochlorococcus marinus (strain MIT 9312).